The primary structure comprises 244 residues: 1-(5-phosphoribosyl)-5-[(5-phosphoribosylamino)methylideneamino] imidazole-4-carboxamide isomerase (244 aa).

Catalysis depends on aspartate 7, which acts as the Proton acceptor. Aspartate 129 acts as the Proton donor in catalysis.

Belongs to the HisA/HisF family.

The protein localises to the cytoplasm. The catalysed reaction is 1-(5-phospho-beta-D-ribosyl)-5-[(5-phospho-beta-D-ribosylamino)methylideneamino]imidazole-4-carboxamide = 5-[(5-phospho-1-deoxy-D-ribulos-1-ylimino)methylamino]-1-(5-phospho-beta-D-ribosyl)imidazole-4-carboxamide. Its pathway is amino-acid biosynthesis; L-histidine biosynthesis; L-histidine from 5-phospho-alpha-D-ribose 1-diphosphate: step 4/9. The polypeptide is 1-(5-phosphoribosyl)-5-[(5-phosphoribosylamino)methylideneamino] imidazole-4-carboxamide isomerase (Pseudoalteromonas atlantica (strain T6c / ATCC BAA-1087)).